The chain runs to 431 residues: Tol-Pal system protein TolB (431 aa).

A signal peptide spans 1–26 (MSLMTKLGFRALVASCLITAGSAANA). The interval 406–431 (DGSAPPQILSVQGGSVREPSWGPFMQ) is disordered.

This sequence belongs to the TolB family. In terms of assembly, the Tol-Pal system is composed of five core proteins: the inner membrane proteins TolA, TolQ and TolR, the periplasmic protein TolB and the outer membrane protein Pal. They form a network linking the inner and outer membranes and the peptidoglycan layer.

The protein localises to the periplasm. Part of the Tol-Pal system, which plays a role in outer membrane invagination during cell division and is important for maintaining outer membrane integrity. The protein is Tol-Pal system protein TolB of Burkholderia cenocepacia (strain HI2424).